The primary structure comprises 336 residues: Potassium channel subfamily K member 1 (336 aa).

At 1-20 (MLQSLAGSSCVRLVERHRSA) the chain is on the cytoplasmic side. Residues 21 to 41 (WCFGFLVLGYLLYLVFGAVVF) traverse the membrane as a helical segment. Over 42–103 (SSVELPYEDL…SNASGNWNWD (62 aa)) the chain is Extracellular. A glycan (N-linked (GlcNAc...) asparagine) is linked at asparagine 95. Positions 104 to 116 (FTSALFFASTVLS) form an intramembrane region, helical. An intramembrane segment occupies 117–122 (TTGYGH). The tract at residues 117-122 (TTGYGH) is selectivity filter 1. The Extracellular segment spans residues 123–132 (TVPLSDGGKA). A helical transmembrane segment spans residues 133–156 (FCIIYSVIGIPFTLLFLTAVVQRV). Over 157 to 181 (TIHVTRRPVLYFHVRWGFSKQAVAI) the chain is Cytoplasmic. A helical membrane pass occupies residues 182–202 (VHAVLLGVVTVSCFFFIPAAV). Residues 203-211 (FSVLEDDWN) lie on the Extracellular side of the membrane. Positions 212-224 (FLESFYFCFISLS) form an intramembrane region, helical. Residues 225 to 230 (TIGLGD) form a selectivity filter 2 region. The stretch at 225–231 (TIGLGDY) is an intramembrane region. Residues 232–243 (VPGEGYNQKFRE) are Extracellular-facing. A helical membrane pass occupies residues 244-267 (LYKIGITCYLLLGLIAMLVVLETF). The Cytoplasmic segment spans residues 268–336 (CELHELKKFR…PALADGASDH (69 aa)). Residue lysine 274 forms a Glycyl lysine isopeptide (Lys-Gly) (interchain with G-Cter in SUMO) linkage. The tract at residues 293-299 (IIEHDQL) is important for intracellular retention in recycling endosomes. A disordered region spans residues 307 to 336 (QAAGVQEDQKQNEPFVSPQPPALADGASDH).

This sequence belongs to the two pore domain potassium channel (TC 1.A.1.8) family. As to quaternary structure, homodimer; disulfide-linked. Heterodimer with KCNK2; disulfide-linked. In astrocytes, forms mostly heterodimeric potassium channels with KCNK2, with only a minor proportion of functional channels containing homodimeric KCNK1. Interacts with KCNK3 and KCNK9, forming functional heterodimeric channels. Interacts with GNG4. Identified in a complex with PSD and ARF6; interacts only with PSD that is bound to ARF6. Interacts with UBE2I. Post-translationally, sumoylation is controversial. Sumoylated by UBE2I. Not sumoylated when expressed in xenopus oocytes or mammalian cells. Sumoylation inactivates the channel, but does not interfere with expression at the cell membrane. Sumoylation of a single subunit is sufficient to silence the dimeric channel. Sumoylation of KCNK1 is sufficient to silence heterodimeric channels formed by KCNK1 and KCNK3 or KCNK9. Desumoylated by SENP1; this activates the channel. Desumoylated by SENP1; this strongly increases halothane-mediated activation of heterodimeric channels formed with KCNK9. SENP1 treatment has no effect.

The protein localises to the cell membrane. It localises to the recycling endosome. The protein resides in the synaptic cell membrane. Its subcellular location is the cytoplasmic vesicle. It is found in the perikaryon. The protein localises to the cell projection. It localises to the dendrite. The protein resides in the apical cell membrane. It catalyses the reaction K(+)(in) = K(+)(out). The catalysed reaction is NH4(+)(in) = NH4(+)(out). The enzyme catalyses Na(+)(in) = Na(+)(out). It carries out the reaction Rb(+)(in) = Rb(+)(out). It catalyses the reaction Cs(+)(in) = Cs(+)(out). The catalysed reaction is Li(+)(in) = Li(+)(out). The enzyme catalyses L-glutamate(out) = L-glutamate(in). It carries out the reaction chloride(in) = chloride(out). Its function is as follows. Ion channel that contributes to passive transmembrane potassium transport and to the regulation of the resting membrane potential in brain astrocytes, but also in kidney and in other tissues. Forms dimeric channels through which potassium ions pass in accordance with their electrochemical gradient. The channel is selective for K(+) ions at physiological potassium concentrations and at neutral pH, but becomes permeable to Na(+) at subphysiological K(+) levels and upon acidification of the extracellular medium. The homodimer has very low potassium channel activity, when expressed in heterologous systems, and can function as weakly inward rectifying potassium channel. Channel activity is modulated by activation of serotonin receptors. Heterodimeric channels containing KCNK1 and KCNK2 have much higher activity, and may represent the predominant form in astrocytes. Heterodimeric channels containing KCNK1 and KCNK3 or KCNK9 have much higher activity. Heterodimeric channels formed by KCNK1 and KCNK9 may contribute to halothane-sensitive currents. Mediates outward rectifying potassium currents in dentate gyrus granule cells and contributes to the regulation of their resting membrane potential. Contributes to the regulation of action potential firing in dentate gyrus granule cells and down-regulates their intrinsic excitability. In astrocytes, the heterodimer formed by KCNK1 and KCNK2 is required for rapid glutamate release in response to activation of G-protein coupled receptors, such as F2R and CNR1. Required for normal ion and water transport in the kidney. Contributes to the regulation of the resting membrane potential of pancreatic beta cells. The low channel activity of homodimeric KCNK1 may be due to sumoylation. The low channel activity may be due to rapid internalization from the cell membrane and retention in recycling endosomes. Permeable to monovalent cations with ion selectivity for K(+) &gt; Rb(+) &gt;&gt; NH4(+) &gt;&gt; Cs(+) = Na(+) = Li(+). The chain is Potassium channel subfamily K member 1 from Bos taurus (Bovine).